Here is a 318-residue protein sequence, read N- to C-terminus: NADH-ubiquinone oxidoreductase chain 1 (318 aa).

8 consecutive transmembrane segments (helical) span residues 3–23 (FVNL…LTLL), 68–88 (LILF…MWIP), 102–122 (ILFM…SGWA), 146–166 (LAII…STLI), 171–191 (HIWL…STLA), 222–242 (LFFL…TILF), 253–273 (EMYT…FLWI), and 294–314 (LPLT…LASI).

This sequence belongs to the complex I subunit 1 family.

It is found in the mitochondrion inner membrane. The enzyme catalyses a ubiquinone + NADH + 5 H(+)(in) = a ubiquinol + NAD(+) + 4 H(+)(out). Functionally, core subunit of the mitochondrial membrane respiratory chain NADH dehydrogenase (Complex I) that is believed to belong to the minimal assembly required for catalysis. Complex I functions in the transfer of electrons from NADH to the respiratory chain. The immediate electron acceptor for the enzyme is believed to be ubiquinone. The polypeptide is NADH-ubiquinone oxidoreductase chain 1 (MT-ND1) (Nyctalus plancyi velutinus (Fine-haired noctule)).